Consider the following 149-residue polypeptide: UPF0178 protein HEAR0259 (149 aa).

This sequence belongs to the UPF0178 family.

In Herminiimonas arsenicoxydans, this protein is UPF0178 protein HEAR0259.